We begin with the raw amino-acid sequence, 175 residues long: Putative transmembrane protein ORF175 (175 aa).

4 helical membrane passes run 14-34, 58-78, 101-121, and 142-162; these read LGIVYGSTLIILLLPLIGSFM, VLSNFGIFGGLALGVGSAIAF, IVVALLVSQFIFGGWATFALF, and ITPFIDGLIATLGGLMVVLSI.

Its subcellular location is the host membrane. The chain is Putative transmembrane protein ORF175 from Acidianus two-tailed virus (ATV).